The primary structure comprises 71 residues: DNA-directed RNA polymerase subunit omega (71 aa).

Belongs to the RNA polymerase subunit omega family. In terms of assembly, the RNAP catalytic core consists of 2 alpha, 1 beta, 1 beta' and 1 omega subunit. When a sigma factor is associated with the core the holoenzyme is formed, which can initiate transcription.

It catalyses the reaction RNA(n) + a ribonucleoside 5'-triphosphate = RNA(n+1) + diphosphate. Functionally, promotes RNA polymerase assembly. Latches the N- and C-terminal regions of the beta' subunit thereby facilitating its interaction with the beta and alpha subunits. The protein is DNA-directed RNA polymerase subunit omega of Syntrophomonas wolfei subsp. wolfei (strain DSM 2245B / Goettingen).